A 484-amino-acid chain; its full sequence is Probable protein disulfide-isomerase ER-60 (484 aa).

The N-terminal stretch at 1–14 is a signal peptide; that stretch reads MRWLLSCLFLVAFA. 2 consecutive Thioredoxin domains span residues 15–125 and 338–467; these read SCSK…SRAG and FEDG…REAT. Catalysis depends on nucleophile residues Cys46, Cys49, Cys388, and Cys391. Cystine bridges form between Cys46-Cys49 and Cys388-Cys391. The Prevents secretion from ER signature appears at 481 to 484; that stretch reads KSEL.

This sequence belongs to the protein disulfide isomerase family.

The protein localises to the endoplasmic reticulum lumen. It carries out the reaction Catalyzes the rearrangement of -S-S- bonds in proteins.. The polypeptide is Probable protein disulfide-isomerase ER-60 (Schistosoma mansoni (Blood fluke)).